Reading from the N-terminus, the 642-residue chain is Hemagglutinin-esterase-fusion glycoprotein (642 aa).

A signal peptide is located at residue Ala-1. The segment at 2-27 is fusion domain-1; the sequence is EKIKICLQKQVNSSFSLHNGFGGNLY. Residues 2 to 617 lie on the Extracellular side of the membrane; it reads EKIKICLQKQ…QSDPFYWGSS (616 aa). 7 disulfide bridges follow: Cys-7–Cys-570, Cys-107–Cys-152, Cys-127–Cys-175, Cys-197–Cys-239, Cys-216–Cys-303, Cys-224–Cys-276, and Cys-333–Cys-339. N-linked (GlcNAc...) asparagine; by host glycans are attached at residues Asn-13 and Asn-48. The esterase domain-1 stretch occupies residues 28–138; the sequence is ATEEKRMFEL…RKNWTDIKLN (111 aa). The active-site Nucleophile is Ser-58. Asn-131 carries N-linked (GlcNAc...) asparagine; by host glycosylation. Positions 138 to 297 are N-acetyl-9-O-acetylneuraminic acid binding; that stretch reads NFQKSIYELA…VRSSPRFLLM (160 aa). Residues 298-352 are esterase domain-2; it reads PERSYCFDMKEKGLVTAVQSIWGKGRKSDYAVDQACLSTPGCMLIQKQKPYIGEA. Residues Asp-353 and His-356 each act as charge relay system in the active site. The fusion domain-2 stretch occupies residues 353–638; that stretch reads DDHHGDQEMR…AALVISGIAI (286 aa). Asn-382 is a glycosylation site (N-linked (GlcNAc...) asparagine; by host). Residues 618-638 form a helical membrane-spanning segment; sequence LGLAITTPISLAALVISGIAI. Residues 639–642 are Cytoplasmic-facing; that stretch reads CRTK.

Belongs to the influenza type C/coronaviruses hemagglutinin-esterase family. As to quaternary structure, homotrimer of disulfide-linked HEF1-HEF2. Post-translationally, in natural infection, inactive HEF is matured into HEF1 and HEF2 outside the cell by one or more trypsin-like, arginine-specific endoprotease.

The protein localises to the virion membrane. It is found in the host cell membrane. It carries out the reaction N-acetyl-9-O-acetylneuraminate + H2O = N-acetylneuraminate + acetate + H(+). The catalysed reaction is N-acetyl-4-O-acetylneuraminate + H2O = N-acetylneuraminate + acetate + H(+). Its function is as follows. Binds to the N-acetyl-9-O-acetylneuraminic acid residues on the cell surface, bringing about the attachment of the virus particle to the cell. Plays a major role in the determination of host range restriction and virulence. Class I viral fusion protein. Responsible for penetration of the virus into the cell cytoplasm by mediating the fusion of the membrane of the endocytosed virus particle with the endosomal membrane. Low pH in endosomes induce an irreversible conformational change in HEF2, releasing the fusion hydrophobic peptide. Several trimers are required to form a competent fusion pore. Displays a receptor-destroying activity which is a neuraminidate-O-acetyl esterase. This activity cleaves off any receptor on the cell surface, which would otherwise prevent virions release. These cleavages prevent self-aggregation and ensure the efficient spread of the progeny virus from cell to cell. The polypeptide is Hemagglutinin-esterase-fusion glycoprotein (HE) (Influenza C virus (strain C/England/892/1983)).